Here is a 296-residue protein sequence, read N- to C-terminus: NAD kinase (296 aa).

D72 functions as the Proton acceptor in the catalytic mechanism. NAD(+) is bound by residues 72–73, 146–147, R157, K174, D176, 187–192, and Q247; these read DG, ND, and TAYALS.

The protein belongs to the NAD kinase family. A divalent metal cation is required as a cofactor.

It localises to the cytoplasm. The enzyme catalyses NAD(+) + ATP = ADP + NADP(+) + H(+). Functionally, involved in the regulation of the intracellular balance of NAD and NADP, and is a key enzyme in the biosynthesis of NADP. Catalyzes specifically the phosphorylation on 2'-hydroxyl of the adenosine moiety of NAD to yield NADP. This Pseudomonas savastanoi pv. phaseolicola (strain 1448A / Race 6) (Pseudomonas syringae pv. phaseolicola (strain 1448A / Race 6)) protein is NAD kinase.